Reading from the N-terminus, the 237-residue chain is uncharacterized protein (237 aa).

The signal sequence occupies residues 1–27 (MKSFLRKPKFWLLLLGGLSTSSIILSA). A lipid anchor (N-palmitoyl cysteine) is attached at Cys-28. The S-diacylglycerol cysteine moiety is linked to residue Cys-28.

Belongs to the MG307/MG309/MG338 family.

Its subcellular location is the membrane. This is an uncharacterized protein from Mycoplasma pneumoniae (strain ATCC 29342 / M129 / Subtype 1) (Mycoplasmoides pneumoniae).